We begin with the raw amino-acid sequence, 688 residues long: Transcription factor GTE9 (688 aa).

Residues methionine 1–cysteine 36 form a disordered region. Positions threonine 132–leucine 238 constitute a Bromo domain. The 82-residue stretch at glutamate 280 to lysine 361 folds into the NET domain. Residues glycine 423 to glutamate 505 are disordered. Serine 478 carries the post-translational modification Phosphoserine. The segment covering glutamine 491 to lysine 500 has biased composition (polar residues). The tract at residues glutamate 505–aspartate 688 is transcription activation domain. Residues threonine 534 to lysine 613 adopt a coiled-coil conformation. Residues phenylalanine 660–aspartate 688 are disordered.

In terms of assembly, interacts with BT1.

It localises to the nucleus. This Arabidopsis thaliana (Mouse-ear cress) protein is Transcription factor GTE9 (GTE9).